The chain runs to 835 residues: Protein translocase subunit SecA 1 (835 aa).

ATP-binding positions include glutamine 85, 103–107 (GEGKT), and aspartate 492. Residues 788–807 (VQGEAVHPSSDGEEAKKKPV) form a disordered region. The Zn(2+) site is built by cysteine 819, cysteine 821, cysteine 830, and cysteine 831.

The protein belongs to the SecA family. Monomer and homodimer. Part of the essential Sec protein translocation apparatus which comprises SecA, SecYEG and auxiliary proteins SecDF. Other proteins may also be involved. Zn(2+) serves as cofactor.

The protein localises to the cell membrane. It is found in the cytoplasm. It carries out the reaction ATP + H2O + cellular proteinSide 1 = ADP + phosphate + cellular proteinSide 2.. Part of the Sec protein translocase complex. Interacts with the SecYEG preprotein conducting channel. Has a central role in coupling the hydrolysis of ATP to the transfer of proteins into and across the cell membrane, serving as an ATP-driven molecular motor driving the stepwise translocation of polypeptide chains across the membrane. The chain is Protein translocase subunit SecA 1 from Bacillus thuringiensis (strain Al Hakam).